A 520-amino-acid polypeptide reads, in one-letter code: Bifunctional purine biosynthesis protein PurH (520 aa).

The MGS-like domain occupies 1–147 (MAKIGRALIS…KNNRDVTVVV (147 aa)).

The protein belongs to the PurH family.

The enzyme catalyses (6R)-10-formyltetrahydrofolate + 5-amino-1-(5-phospho-beta-D-ribosyl)imidazole-4-carboxamide = 5-formamido-1-(5-phospho-D-ribosyl)imidazole-4-carboxamide + (6S)-5,6,7,8-tetrahydrofolate. It catalyses the reaction IMP + H2O = 5-formamido-1-(5-phospho-D-ribosyl)imidazole-4-carboxamide. Its pathway is purine metabolism; IMP biosynthesis via de novo pathway; 5-formamido-1-(5-phospho-D-ribosyl)imidazole-4-carboxamide from 5-amino-1-(5-phospho-D-ribosyl)imidazole-4-carboxamide (10-formyl THF route): step 1/1. The protein operates within purine metabolism; IMP biosynthesis via de novo pathway; IMP from 5-formamido-1-(5-phospho-D-ribosyl)imidazole-4-carboxamide: step 1/1. The chain is Bifunctional purine biosynthesis protein PurH from Geobacter sp. (strain M21).